Here is a 444-residue protein sequence, read N- to C-terminus: N-succinylarginine dihydrolase (444 aa).

Substrate contacts are provided by residues 19–28 (AGLSFGNVAS), asparagine 110, and 137–138 (HR). Glutamate 174 is an active-site residue. Arginine 214 is a substrate binding site. Histidine 250 is a catalytic residue. The substrate site is built by aspartate 252 and asparagine 362. The Nucleophile role is filled by cysteine 368.

This sequence belongs to the succinylarginine dihydrolase family. Homodimer.

It carries out the reaction N(2)-succinyl-L-arginine + 2 H2O + 2 H(+) = N(2)-succinyl-L-ornithine + 2 NH4(+) + CO2. It participates in amino-acid degradation; L-arginine degradation via AST pathway; L-glutamate and succinate from L-arginine: step 2/5. Catalyzes the hydrolysis of N(2)-succinylarginine into N(2)-succinylornithine, ammonia and CO(2). The sequence is that of N-succinylarginine dihydrolase from Shewanella baltica (strain OS185).